Here is a 459-residue protein sequence, read N- to C-terminus: Mitochondrial distribution and morphology protein 34 (459 aa).

One can recognise an SMP-LTD domain in the interval 1 to 190; that stretch reads MSFRFNEAVF…LPSLIFNTSQ (190 aa). Basic and acidic residues predominate over residues 338–347; the sequence is RSNSNDDNAK. The disordered stretch occupies residues 338–375; the sequence is RSNSNDDNAKPRRRKIKCKKTRTPSNLQSQGEQAVDDS. Basic residues predominate over residues 348-359; the sequence is PRRRKIKCKKTR.

Belongs to the MDM34 family. In terms of assembly, component of the ER-mitochondria encounter structure (ERMES) or MDM complex, composed of MMM1, MDM10, MDM12 and MDM34. In terms of processing, ubiquitinated by a SCF (SKP1-CUL1-F-box protein) E3 ubiquitin-protein ligase complex containing the F-box protein MDM30. Ubiquitination is important for mitochondrial integrity.

The protein resides in the mitochondrion outer membrane. In terms of biological role, component of the ERMES/MDM complex, which serves as a molecular tether to connect the endoplasmic reticulum (ER) and mitochondria. Components of this complex are involved in the control of mitochondrial shape and protein biogenesis, and function in nonvesicular lipid trafficking between the ER and mitochondria. MDM34 is required for the interaction of the ER-resident membrane protein MMM1 and the outer mitochondrial membrane-resident beta-barrel protein MDM10. The sequence is that of Mitochondrial distribution and morphology protein 34 from Saccharomyces cerevisiae (strain YJM789) (Baker's yeast).